Here is a 92-residue protein sequence, read N- to C-terminus: MPRSLKKGPFIDLHLLKKVEKAVESGDKKPIKTWSRRSMIIPTMINLTIAVHNGRQHVPVFVTEDMIGHKLGEFAPTRTYRGHAADKKAKKR.

The protein belongs to the universal ribosomal protein uS19 family.

Functionally, protein S19 forms a complex with S13 that binds strongly to the 16S ribosomal RNA. The sequence is that of Small ribosomal subunit protein uS19 from Aliivibrio salmonicida (strain LFI1238) (Vibrio salmonicida (strain LFI1238)).